A 423-amino-acid polypeptide reads, in one-letter code: Serine hydroxymethyltransferase (423 aa).

(6S)-5,6,7,8-tetrahydrofolate contacts are provided by residues leucine 121 and 125-127; that span reads GHL. Lysine 230 carries the N6-(pyridoxal phosphate)lysine modification. 355-357 provides a ligand contact to (6S)-5,6,7,8-tetrahydrofolate; the sequence is SPF.

Belongs to the SHMT family. In terms of assembly, homodimer. Pyridoxal 5'-phosphate serves as cofactor.

It is found in the cytoplasm. It carries out the reaction (6R)-5,10-methylene-5,6,7,8-tetrahydrofolate + glycine + H2O = (6S)-5,6,7,8-tetrahydrofolate + L-serine. Its pathway is one-carbon metabolism; tetrahydrofolate interconversion. It functions in the pathway amino-acid biosynthesis; glycine biosynthesis; glycine from L-serine: step 1/1. In terms of biological role, catalyzes the reversible interconversion of serine and glycine with tetrahydrofolate (THF) serving as the one-carbon carrier. This reaction serves as the major source of one-carbon groups required for the biosynthesis of purines, thymidylate, methionine, and other important biomolecules. Also exhibits THF-independent aldolase activity toward beta-hydroxyamino acids, producing glycine and aldehydes, via a retro-aldol mechanism. The chain is Serine hydroxymethyltransferase from Hydrogenovibrio crunogenus (strain DSM 25203 / XCL-2) (Thiomicrospira crunogena).